A 437-amino-acid polypeptide reads, in one-letter code: UDP-N-acetylmuramoylalanine--D-glutamate ligase (437 aa).

112–118 (GSNGKST) contributes to the ATP binding site.

This sequence belongs to the MurCDEF family.

It is found in the cytoplasm. It carries out the reaction UDP-N-acetyl-alpha-D-muramoyl-L-alanine + D-glutamate + ATP = UDP-N-acetyl-alpha-D-muramoyl-L-alanyl-D-glutamate + ADP + phosphate + H(+). The protein operates within cell wall biogenesis; peptidoglycan biosynthesis. Functionally, cell wall formation. Catalyzes the addition of glutamate to the nucleotide precursor UDP-N-acetylmuramoyl-L-alanine (UMA). The polypeptide is UDP-N-acetylmuramoylalanine--D-glutamate ligase (Haemophilus influenzae (strain PittGG)).